Consider the following 70-residue polypeptide: Large ribosomal subunit protein bL31 (70 aa).

Residues Cys16, Cys18, Cys37, and Cys40 each contribute to the Zn(2+) site.

The protein belongs to the bacterial ribosomal protein bL31 family. Type A subfamily. As to quaternary structure, part of the 50S ribosomal subunit. The cofactor is Zn(2+).

Functionally, binds the 23S rRNA. The polypeptide is Large ribosomal subunit protein bL31 (Shewanella halifaxensis (strain HAW-EB4)).